Reading from the N-terminus, the 115-residue chain is Large ribosomal subunit protein uL22 (115 aa).

Belongs to the universal ribosomal protein uL22 family. In terms of assembly, part of the 50S ribosomal subunit.

Functionally, this protein binds specifically to 23S rRNA; its binding is stimulated by other ribosomal proteins, e.g. L4, L17, and L20. It is important during the early stages of 50S assembly. It makes multiple contacts with different domains of the 23S rRNA in the assembled 50S subunit and ribosome. In terms of biological role, the globular domain of the protein is located near the polypeptide exit tunnel on the outside of the subunit, while an extended beta-hairpin is found that lines the wall of the exit tunnel in the center of the 70S ribosome. In Limosilactobacillus reuteri subsp. reuteri (strain JCM 1112) (Lactobacillus reuteri), this protein is Large ribosomal subunit protein uL22.